The primary structure comprises 313 residues: MTARRPTRFAKGELNVYRAPRDVTDVTRALRSTGRRVVLVPTMGALHEGHLTLIRAAKRVQGAVVVVSIFVNPLQFGAGEDLDAYPRTLDDDLAALRAEGVEIAFTPTVGDMYPYGTRTSVHPGPLGDDLEGASRPGHFAGVLTVVCKLLHIVRPDRAFFGEKDYQQLVLIRQMVTDLNIDTRIVGVPTVREADGLALSSRNRYLDEVEREQAGALSAALLAGMYAASNGAAATLDAARAVLDEVPAIEVDYLQVRDPMLGPVPHEGAARLLVAARLGQTRLLDNIAVDIGASDGIDGHPRVGSPDHQLPWRN.

Met-43–His-50 serves as a coordination point for ATP. Catalysis depends on His-50, which acts as the Proton donor. Gln-75 lines the (R)-pantoate pocket. Residue Gln-75 coordinates beta-alanine. An ATP-binding site is contributed by Gly-161–Asp-164. Gln-167 contacts (R)-pantoate. ATP-binding positions include Val-190 and Leu-198–Arg-201.

Belongs to the pantothenate synthetase family. As to quaternary structure, homodimer.

The protein localises to the cytoplasm. The catalysed reaction is (R)-pantoate + beta-alanine + ATP = (R)-pantothenate + AMP + diphosphate + H(+). Its pathway is cofactor biosynthesis; (R)-pantothenate biosynthesis; (R)-pantothenate from (R)-pantoate and beta-alanine: step 1/1. Functionally, catalyzes the condensation of pantoate with beta-alanine in an ATP-dependent reaction via a pantoyl-adenylate intermediate. The sequence is that of Pantothenate synthetase from Mycobacterium sp. (strain JLS).